A 356-amino-acid polypeptide reads, in one-letter code: MSLWVDKYRPCSLGRLDYHKEQAAQLRNLVQCGDFPHLLVYGPSGAGKKTRIMCILRELYGVGVEKLRIEHQTITTPSKKKIEISTIASNYHLEVNPSDAGNSDRVVIQEMLKTVAQSQQLETNSQRDFKVVLLTEVDKLTKDAQHALRRTMEKYMSTCRLILCCNSTSKVIPPIRSRCLAVRVPAPSIEDICHVLSTVCKKEGLNLPSQLAHRLAEKSCRNLRKALLMCEACRVQQYPFTADQEIPETDWEVYLRETANAIVSQQTPQRLLEVRGRLYELLTHCIPPEIIMKGLLSELLHNCDGQLKGEVAQMAAYYEHRLQLGSKAIYHLEAFVAKFMALYKKFMEDGLEGMMF.

Lys20 bears the N6-acetyllysine mark. Residue Ser125 is modified to Phosphoserine.

This sequence belongs to the activator 1 small subunits family. In terms of assembly, subunit of the RFC complex, an heteropentameric complex consisting of a large subunit RFC1 and four small subunits RFC2, RFC3, RFC4 and RFC5; the RFC complex interacts with PCNA. Forms an heterotetrameric complex with RFC2, RFC4 and RFC5; this complex has ATPase activity but is not stimulated by PCNA. The heterotetramer of subunits RFC2, RFC3, RFC4 and RFC5 interacts with RAD17. Interacts with CNTD1; this interaction facilitates crossover formation.

The protein resides in the nucleus. Its function is as follows. Subunit of the replication factor C (RFC) complex which acts during elongation of primed DNA templates by DNA polymerases delta and epsilon, and is necessary for ATP-dependent loading of proliferating cell nuclear antigen (PCNA) onto primed DNA. The protein is Replication factor C subunit 3 (RFC3) of Homo sapiens (Human).